The chain runs to 216 residues: Adenylate kinase (216 aa).

Position 10 to 15 (10 to 15) interacts with ATP; sequence GAGKGT. The interval 30-59 is NMP; that stretch reads STGDIFRANIKEKTPLGIEAKRYIDNGQLV. Residues Thr31, Arg36, 57 to 59, 85 to 88, and Gln92 contribute to the AMP site; these read QLV and GFPR. Residues 126–163 form an LID region; sequence GRRVCTSCGASYHIRFNPPKIEGKCDICDNELIQRKDD. Residue Arg127 coordinates ATP. Residues Cys130 and Cys133 each contribute to the Zn(2+) site. 136–137 contacts ATP; sequence SY. Residues Cys150 and Cys153 each contribute to the Zn(2+) site. 2 residues coordinate AMP: Arg160 and Arg171. Glu199 is a binding site for ATP.

The protein belongs to the adenylate kinase family. As to quaternary structure, monomer.

Its subcellular location is the cytoplasm. The catalysed reaction is AMP + ATP = 2 ADP. It functions in the pathway purine metabolism; AMP biosynthesis via salvage pathway; AMP from ADP: step 1/1. Catalyzes the reversible transfer of the terminal phosphate group between ATP and AMP. Plays an important role in cellular energy homeostasis and in adenine nucleotide metabolism. In Clostridium botulinum (strain ATCC 19397 / Type A), this protein is Adenylate kinase.